Consider the following 345-residue polypeptide: MLSLSCSSSSSSLLPPSLHYHGSSSVQSIVVPRRSLISFRRKVSCCCIAPPQNLDNDATKFDSLTKSGGGMCKERGLENDSDVLIECRDVYKSFGEKHILKGVSFKIRHGEAVGVIGPSGTGKSTILKIMAGLLAPDKGEVYIRGKKRAGLISDEEISGLRIGLVFQSAALFDSLSVRENVGFLLYERSKMSENQISELVTQTLAAVGLKGVENRLPSELSGGMKKRVALARSLIFDTTKEVIEPEVLLYDEPTAGLDPIASTVVEDLIRSVHMTDEDAVGKPGKIASYLVVTHQHSTIQRAVDRLLFLYEGKIVWQGMTHEFTTSTNPIVQQFATGSLDGPIRY.

Residues 1 to 46 constitute a chloroplast transit peptide; the sequence is MLSLSCSSSSSSLLPPSLHYHGSSSVQSIVVPRRSLISFRRKVSCC. In terms of domain architecture, ABC transporter spans 85 to 336; it reads IECRDVYKSF…TNPIVQQFAT (252 aa). 117 to 124 provides a ligand contact to ATP; the sequence is GPSGTGKS.

Belongs to the ABC transporter superfamily. ABCI family. Catalytic subunit of the TGD complex, a lipid translocator at the inner chloroplast envelope membrane made of TGD1, TGD2 and TGD3. Interacts with TGD1 and TGD2 with an overall subunit stoichiometry of 2 TGD1, 2 TGD3 and 8 to 12 TGD2. Interacts with TGD5.

Its subcellular location is the plastid. It is found in the chloroplast stroma. In terms of biological role, ATPase transporter involved in lipid transfer from the endoplasmic reticulum (ER) to plastids, and necessary for thylakoids formation. Not involved in transition metal transport pathways. In Arabidopsis thaliana (Mouse-ear cress), this protein is Protein TRIGALACTOSYLDIACYLGLYCEROL 3, chloroplastic.